A 947-amino-acid chain; its full sequence is Vacuolar membrane protease (947 aa).

Residues 1–15 (MRFKALLRAIFRFRK) lie on the Cytoplasmic side of the membrane. A helical membrane pass occupies residues 16 to 36 (TNFSILLIITYAIIIALLVFD). At 37–358 (RSRYKLDLPN…GLFFVVVDTK (322 aa)) the chain is on the vacuolar side. Residues asparagine 46, asparagine 92, asparagine 108, and asparagine 121 are each glycosylated (N-linked (GlcNAc...) asparagine). The Zn(2+) site is built by histidine 156 and aspartate 168. The active-site Proton acceptor is the glutamate 200. Zn(2+)-binding residues include glutamate 201, glutamate 226, and histidine 300. Asparagine 319 carries an N-linked (GlcNAc...) asparagine glycan. A helical transmembrane segment spans residues 359 to 379 (HLFYADIFMLIVGPILLMMKA). Topologically, residues 380-391 (HLDKRRRLERSR) are cytoplasmic. The helical transmembrane segment at 392-412 (LVQLRLLLSLGLSVVFLLLLT) threads the bilayer. Residues 413–428 (KSLNSFNPFVYSADYR) lie on the Vacuolar side of the membrane. Residues 429–449 (TPLTGLFLLFVTVNYLIVTLA) traverse the membrane as a helical segment. Over 450–458 (ERLNPTESY) the chain is Cytoplasmic. The chain crosses the membrane as a helical span at residues 459 to 479 (KTVAINQIFIIAWLMQLYITL). At 480 to 489 (RMAKSDFTLT) the chain is on the vacuolar side. Residues 490-510 (GTYPLSIFSGCLIVALSLGLF) traverse the membrane as a helical segment. Residues 511–601 (GTKNKAVNDA…DKNSDFSKHY (91 aa)) are Cytoplasmic-facing. Composition is skewed to polar residues over residues 522-531 (NSSVRYASSQ) and 546-567 (NINQVRDTGNQEVTSNTNTDLH). The disordered stretch occupies residues 522–573 (NSSVRYASSQNDEDNPLPSQDRGENINQVRDTGNQEVTSNTNTDLHSNAEEV). A helical transmembrane segment spans residues 602-622 (NWIVQFLCIVPISSFIFLFSL). Over 623–641 (DYTLDAIHKMVQETTDDVQ) the chain is Vacuolar. A helical membrane pass occupies residues 642–662 (LICIIITIGVILLALPILPFI). The Cytoplasmic portion of the chain corresponds to 663–669 (SKLNYQS). Residues 670–690 (SVIIAIIGVLLFGKSLVMQPF) traverse the membrane as a helical segment. Residues 691-947 (SEIAPLKVRF…LVVIKDKIQL (257 aa)) lie on the Vacuolar side of the membrane. Residues asparagine 742, asparagine 784, asparagine 801, and asparagine 833 are each glycosylated (N-linked (GlcNAc...) asparagine).

Belongs to the peptidase M28 family. Requires Zn(2+) as cofactor.

The protein resides in the vacuole membrane. May be involved in vacuolar sorting and osmoregulation. In Candida glabrata (strain ATCC 2001 / BCRC 20586 / JCM 3761 / NBRC 0622 / NRRL Y-65 / CBS 138) (Yeast), this protein is Vacuolar membrane protease.